Here is a 314-residue protein sequence, read N- to C-terminus: Nodulation protein D 1 (314 aa).

The 58-residue stretch at 6 to 63 (LDLNLLVALDALMTERNLTAAARSINLSQPAMSAAVGRLRTYFNDDLFTMVGRELVPT) folds into the HTH lysR-type domain. Residues 23-42 (LTAAARSINLSQPAMSAAVG) constitute a DNA-binding region (H-T-H motif).

Belongs to the LysR transcriptional regulatory family.

Its function is as follows. NodD regulates the expression of the nodABCFE genes which encode other nodulation proteins. NodD is also a negative regulator of its own expression. Binds flavonoids as inducers. The sequence is that of Nodulation protein D 1 (nodD1) from Rhizobium leguminosarum bv. phaseoli.